We begin with the raw amino-acid sequence, 477 residues long: Serine/threonine-protein kinase prp4 (477 aa).

A disordered region spans residues 25-123 (KYQQTGNGHS…SPSVKRQNTG (99 aa)). Positions 38–47 (IPEKKLKEDV) are enriched in basic and acidic residues. Over residues 74–86 (EGSNSNTKLDVTN) the composition is skewed to polar residues. The span at 87 to 98 (STTSDSPSIKSS) shows a compositional bias: low complexity. At S92 the chain carries Phosphoserine. Residues 113–123 (PSPSVKRQNTG) are compositionally biased toward polar residues. One can recognise a Protein kinase domain in the interval 159–477 (YIVQSNLGKG…ALKHPFFIKK (319 aa)). Residues 165–173 (LGKGMFSTV) and K188 each bind ATP. The active-site Proton acceptor is D286. Position 320 is a phosphotyrosine (Y320).

The protein belongs to the protein kinase superfamily. CMGC Ser/Thr protein kinase family.

The catalysed reaction is L-seryl-[protein] + ATP = O-phospho-L-seryl-[protein] + ADP + H(+). It carries out the reaction L-threonyl-[protein] + ATP = O-phospho-L-threonyl-[protein] + ADP + H(+). In terms of biological role, has a role in pre-mRNA splicing and is essential for growth. Phosphorylates srp1. The sequence is that of Serine/threonine-protein kinase prp4 (prp4) from Schizosaccharomyces pombe (strain 972 / ATCC 24843) (Fission yeast).